The primary structure comprises 201 residues: MARYTGPVTRKSRRLGVDLVGGSSAYEKRPYPPGQHGRARIKESEYRQQLQEKQKARFTYGVMEKQFRRYYAEAVRSSGKTGEQLLQILESRLDNVVYRAGLARTRRMARQLVSHGHFTVNNVKVDVPSYRVSQYDIIDIKPKSLNTLPFEVARETAGERPIPGWLQVVGERQRILVHQLPERAQIDVPLAEQLIVEFYSK.

A disordered region spans residues 19–41; that stretch reads LVGGSSAYEKRPYPPGQHGRARI. The region spanning 91 to 157 is the S4 RNA-binding domain; the sequence is SRLDNVVYRA…LPFEVARETA (67 aa).

This sequence belongs to the universal ribosomal protein uS4 family. As to quaternary structure, part of the 30S ribosomal subunit. Contacts protein S5. The interaction surface between S4 and S5 is involved in control of translational fidelity.

Functionally, one of the primary rRNA binding proteins, it binds directly to 16S rRNA where it nucleates assembly of the body of the 30S subunit. Its function is as follows. With S5 and S12 plays an important role in translational accuracy. The chain is Small ribosomal subunit protein uS4 from Mycobacteroides abscessus (strain ATCC 19977 / DSM 44196 / CCUG 20993 / CIP 104536 / JCM 13569 / NCTC 13031 / TMC 1543 / L948) (Mycobacterium abscessus).